The following is a 934-amino-acid chain: MITGLLKKIFGSRNERLIKQYRRKVAQINALEPKFEALSDAELQAKTEEFRQRFAKGETLDALLPEAFAVCREASKRVMKMRHFDVQLIGGMVLHDGKIAEMRTGEGKTLTATLAVYLNAISGQGVHVVTVNDYLAQRDAEWMGRLYNWLGLSVGVNLTTMDHDQKQAAYASDITYGTNNEFGFDYLRDNMVYDAGQRVQRPLNYAIVDEVDSILIDEARTPLIISGQAEDHTDLYRRMNGIPAQLTRQIGEEKSDGTGVEKPGDYYVDEKSHQVYLTESGHEKAEQILLQAGLIGEGESLYAPQNITLMHHLYAALRAHSLFFRDQHYVVQNGEVVIVDEFTGRLMSGRRWSDGLHQAVEAKEGVQIQQENQTLATITFQNYFRMYNKLSGMTGTADTEAYEFQEIYGLETVVIPTNRPPQRKDLQDQIYKTSKERYDAVIRDIRDCYERGQPVLVGTTSIENSELLSNLLNQAKLPHQVLNAKQHEREAEIIAQAGRPKMITIATNMAGRGTDIVLGGNVEKQSGFVMADESLSDAEKASRVKTLQDEWQSLHEQVKAAGGLHIVGTERHESRRIDNQLRGRAGRQGDPGSSRFYLSLDDQLLRIFAGDRVRAIMDRLKMPEGEPIEAGIVTRSIESAQRKVEGRNFDIRKQLLQYDDVSNDQRKELYKLRNEILEAQDVGDLVKNLRESVFTELFRTYVPAETMEEQWDVAGLEKTLREDWGVDQPLVKTLEAAQSIEDEDLLKIVLDAAEAVYEGKVAQVGRESFAGFERSVMLQSLDTHWREHLAALDMLRQGIHLRGYAQKDPKQEYKRESFELFGRLLDTIRNEVTRIVFTVRIQSQEELEQASEQIEEDLSALTNLQYKHDEFSELAEVAAGDAEIHGATPAMAASRSAASAAAAALAGEVPKVGRNDPCPCGSGKKYKQCHGKLV.

Residues Q87, 105–109, and D515 contribute to the ATP site; that span reads GEGKT. Zn(2+) is bound by residues C918, C920, C929, and H930.

The protein belongs to the SecA family. As to quaternary structure, monomer and homodimer. Part of the essential Sec protein translocation apparatus which comprises SecA, SecYEG and auxiliary proteins SecDF-YajC and YidC. The cofactor is Zn(2+).

The protein localises to the cell inner membrane. Its subcellular location is the cytoplasm. It carries out the reaction ATP + H2O + cellular proteinSide 1 = ADP + phosphate + cellular proteinSide 2.. Functionally, part of the Sec protein translocase complex. Interacts with the SecYEG preprotein conducting channel. Has a central role in coupling the hydrolysis of ATP to the transfer of proteins into and across the cell membrane, serving both as a receptor for the preprotein-SecB complex and as an ATP-driven molecular motor driving the stepwise translocation of polypeptide chains across the membrane. The sequence is that of Protein translocase subunit SecA from Ralstonia pickettii (strain 12J).